A 55-amino-acid chain; its full sequence is MAKGIREKIKLVSSAGTGHFYTTTKNKRTKPEKLELKKFDPVVRQHVIYKEAKIK.

This sequence belongs to the bacterial ribosomal protein bL33 family.

This is Large ribosomal subunit protein bL33 from Escherichia coli (strain K12 / DH10B).